The sequence spans 473 residues: Chromosomal replication initiator protein DnaA (473 aa).

The interval methionine 1 to threonine 90 is domain I, interacts with DnaA modulators. A domain II region spans residues isoleucine 91 to serine 136. Residues asparagine 137–alanine 353 are domain III, AAA+ region. The ATP site is built by glycine 181, glycine 183, lysine 184, and threonine 185. Positions asparagine 354–serine 473 are domain IV, binds dsDNA.

It belongs to the DnaA family. As to quaternary structure, oligomerizes as a right-handed, spiral filament on DNA at oriC.

It is found in the cytoplasm. Functionally, plays an essential role in the initiation and regulation of chromosomal replication. ATP-DnaA binds to the origin of replication (oriC) to initiate formation of the DNA replication initiation complex once per cell cycle. Binds the DnaA box (a 9 base pair repeat at the origin) and separates the double-stranded (ds)DNA. Forms a right-handed helical filament on oriC DNA; dsDNA binds to the exterior of the filament while single-stranded (ss)DNA is stabiized in the filament's interior. The ATP-DnaA-oriC complex binds and stabilizes one strand of the AT-rich DNA unwinding element (DUE), permitting loading of DNA polymerase. After initiation quickly degrades to an ADP-DnaA complex that is not apt for DNA replication. Binds acidic phospholipids. This Vibrio atlanticus (strain LGP32) (Vibrio splendidus (strain Mel32)) protein is Chromosomal replication initiator protein DnaA.